Here is a 1027-residue protein sequence, read N- to C-terminus: LLGL scribble cell polarity complex component 2 (1027 aa).

WD repeat units lie at residues 36-69 (SALGYSPSLRILAIGTRSGAVKLYGAPGVEFMGL), 76-117 (VLQI…EESF), 132-169 (VTEILPHSSGELLYLGTESGNVFVVQLPGFRTLHDRTI), 193-227 (ALQEHPRDPNQILIGYSRGLVVIWDLQGSRALSHF), 233-268 (LENASWQRDGCLIVTCHSDGSHCQWPVSSDTQNPEP), 282-324 (AITK…GQQT), 332-366 (VIDFTVLSEADPAAAFDDPYALVVLAEEELVVIDL), 388-464 (TCSH…YKLS), 508-583 (QKIF…FVLV), and 592-653 (TSLA…LRQS). Position 653 is a phosphoserine (Ser-653). Over residues 654-669 (FRRMRRSRVSSHKRRP) the composition is skewed to basic residues. Residues 654-678 (FRRMRRSRVSSHKRRPGGPTGEAQA) form a disordered region. WD repeat units lie at residues 715–771 (VRTL…KEIQ), 780–832 (GILV…VSAK), 837–890 (LTAL…VRYS), and 904–927 (VFTKYGQGFYLISPSEFERFSLST). Residues 940 to 981 (TKAKKHNRPSNGNGTGLKMTSSGHVRNSKSQSDGDEKKPGPV) are disordered. The span at 957 to 970 (KMTSSGHVRNSKSQ) shows a compositional bias: polar residues. Ser-971 and Ser-1022 each carry phosphoserine.

This sequence belongs to the WD repeat L(2)GL family. Interacts with GPSM2/LGN, PRKCI/aPKC and PARD6B/Par-6. The complex is enhanced during mitosis. Interacts with DCAF1. Phosphorylated at Ser-653 by PRKCI. Phosphorylation is enhanced during cell polarization induced by calcium. Phosphorylation may occur during the cell-cell contact-induced cell polarization and may contribute to the segregation of LLGL2 from the PRKCI/aPKC and PARD6B/Par-6 complex.

It localises to the cytoplasm. In terms of biological role, part of a complex with GPSM2/LGN, PRKCI/aPKC and PARD6B/Par-6, which may ensure the correct organization and orientation of bipolar spindles for normal cell division. This complex plays roles in the initial phase of the establishment of epithelial cell polarity. The polypeptide is LLGL scribble cell polarity complex component 2 (Llgl2) (Mus musculus (Mouse)).